A 102-amino-acid polypeptide reads, in one-letter code: Small ribosomal subunit protein uS10 (102 aa).

This sequence belongs to the universal ribosomal protein uS10 family. In terms of assembly, part of the 30S ribosomal subunit.

Involved in the binding of tRNA to the ribosomes. In Latilactobacillus sakei subsp. sakei (strain 23K) (Lactobacillus sakei subsp. sakei), this protein is Small ribosomal subunit protein uS10.